The following is a 266-amino-acid chain: Protein-ADP-ribose hydrolase (266 aa).

The 192-residue stretch at 74 to 265 (TDLKDLKPIK…LYKEAFNRDA (192 aa)) folds into the Macro domain. Residues aspartate 93, isoleucine 94, and asparagine 107 each coordinate ADP-D-ribose. The Zn(2+) site is built by cysteine 113, histidine 118, and cysteine 120. Residues cysteine 120, isoleucine 121, aspartate 122, serine 212, threonine 213, glycine 214, and phenylalanine 216 each contribute to the ADP-D-ribose site.

The protein belongs to the MacroD-type family. Zn-Macro subfamily. The cofactor is Zn(2+).

It catalyses the reaction 4-O-(ADP-D-ribosyl)-L-aspartyl-[protein] + H2O = L-aspartyl-[protein] + ADP-D-ribose + H(+). Its function is as follows. ADP-ribosylhydrolase that specifically reverses the SirTM-mediated mono-ADP-ribosylation at an asparatate residue of GcvH-L, by releasing ADP-ribose from the target protein. May play a role in the regulation of the response to host-induced oxidative stress. The polypeptide is Protein-ADP-ribose hydrolase (Staphylococcus aureus (strain MSSA476)).